The following is a 214-amino-acid chain: Orotate phosphoribosyltransferase (214 aa).

5-phospho-alpha-D-ribose 1-diphosphate is bound by residues arginine 125, lysine 126, lysine 129, histidine 131, and 151–159 (EDTSTTGNS). Residues threonine 155 and arginine 183 each contribute to the orotate site.

The protein belongs to the purine/pyrimidine phosphoribosyltransferase family. PyrE subfamily. In terms of assembly, homodimer. The cofactor is Mg(2+).

It catalyses the reaction orotidine 5'-phosphate + diphosphate = orotate + 5-phospho-alpha-D-ribose 1-diphosphate. It functions in the pathway pyrimidine metabolism; UMP biosynthesis via de novo pathway; UMP from orotate: step 1/2. Functionally, catalyzes the transfer of a ribosyl phosphate group from 5-phosphoribose 1-diphosphate to orotate, leading to the formation of orotidine monophosphate (OMP). The protein is Orotate phosphoribosyltransferase of Tropheryma whipplei (strain TW08/27) (Whipple's bacillus).